Consider the following 225-residue polypeptide: UPF0173 metal-dependent hydrolase Pisl_0803 (225 aa).

Belongs to the UPF0173 family.

The sequence is that of UPF0173 metal-dependent hydrolase Pisl_0803 from Pyrobaculum islandicum (strain DSM 4184 / JCM 9189 / GEO3).